We begin with the raw amino-acid sequence, 369 residues long: Cyclin-dependent kinase 5 activator 2 (369 aa).

Residues 1-11 are compositionally biased toward polar residues; it reads MGTVLSLSPAS. Disordered regions lie at residues 1 to 55, 72 to 176, and 330 to 369; these read MGTV…SRLK, ASAK…SPRR, and EAAASTGGPPSGSSASTTSSSSARDSCATGAKHWTMNLDR. The N-myristoyl glycine moiety is linked to residue Gly-2. Positions 74–84 are enriched in basic residues; the sequence is AKKKKGSKKVT. Thr-84 bears the Phosphothreonine mark. Residues 99–112 are compositionally biased toward basic and acidic residues; the sequence is RNRENLLRKGRDGP. A compositionally biased stretch (low complexity) spans 122-144; that stretch reads AVPVPTVPTTAATCEPPSGGSAA. The span at 145 to 171 shows a compositional bias: pro residues; that stretch reads APPPGSGGGKPPPPPPPAPQAAPPAPG. Low complexity predominate over residues 331–352; that stretch reads AAASTGGPPSGSSASTTSSSSA.

The protein belongs to the cyclin-dependent kinase 5 activator family. As to quaternary structure, heterodimer of a catalytic subunit and a regulatory subunit. In terms of processing, myristoylated. The Gly-2-Ala mutant is absent of the cell periphery, suggesting that a proper myristoylation signal is essential for the proper distribution of CDK5R2 (p39).

It localises to the cell membrane. Activator of CDK5/TPKII. The chain is Cyclin-dependent kinase 5 activator 2 (Cdk5r2) from Mus musculus (Mouse).